Reading from the N-terminus, the 398-residue chain is MKDKNIKISGNFVRIHLSGSFLKFQSIYNLKKLYLQLVILTIVAFFWGLLGVIFVQFSGLYDIGMASISQGLARLVNFFITSQNINVDSATIFNAIFWLTQILFNVPFFIFGWFKISKKFTLLTLYFVAVSNLFGFFFSYIPGIDNFFLFANLTTAKDGGFENLINEKGVQLIFWEKSAEKQVSLLFYGLIWGFLQAVFYSVILIIDASTGGLDFLAFWYSEKKYKDIGGILMLINTVSFIIGYVIGTYLTGSLSVQSYVGDDKHQPFGVAFFLSPNLVFTLLMNIVLGLFTSFYFPKYQFVKVEVYGKHIEKIRNYLLDNQQWFSITMFEAEGGYSRQKTQVLVTNCLLIKAAKLLEDVRKFDRDALFSITFIKKLDGYIYDRRTNKQTKHGTENKS.

A run of 6 helical transmembrane segments spans residues 37-57, 92-112, 122-142, 186-206, 228-248, and 268-288; these read LVIL…FVQF, IFNA…FIFG, LLTL…SYIP, LFYG…ILII, IGGI…VIGT, and FGVA…NIVL.

The protein resides in the cell membrane. This is an uncharacterized protein from Mycoplasma genitalium (strain ATCC 33530 / DSM 19775 / NCTC 10195 / G37) (Mycoplasmoides genitalium).